The primary structure comprises 396 residues: S-adenosylmethionine synthase (396 aa).

ATP is bound at residue His-16. Asp-18 is a binding site for Mg(2+). K(+) is bound at residue Glu-44. Residues Glu-57 and Gln-100 each contribute to the L-methionine site. The segment at Gln-100 to Arg-110 is flexible loop. ATP-binding positions include Asp-165–Lys-167, Asp-240, Arg-246–Lys-247, Ala-263, and Lys-267. Residue Asp-240 coordinates L-methionine. L-methionine is bound at residue Lys-271.

The protein belongs to the AdoMet synthase family. Homotetramer; dimer of dimers. Mg(2+) is required as a cofactor. It depends on K(+) as a cofactor.

It localises to the cytoplasm. The enzyme catalyses L-methionine + ATP + H2O = S-adenosyl-L-methionine + phosphate + diphosphate. Its pathway is amino-acid biosynthesis; S-adenosyl-L-methionine biosynthesis; S-adenosyl-L-methionine from L-methionine: step 1/1. In terms of biological role, catalyzes the formation of S-adenosylmethionine (AdoMet) from methionine and ATP. The overall synthetic reaction is composed of two sequential steps, AdoMet formation and the subsequent tripolyphosphate hydrolysis which occurs prior to release of AdoMet from the enzyme. The polypeptide is S-adenosylmethionine synthase (Pseudomonas putida (strain W619)).